Here is a 214-residue protein sequence, read N- to C-terminus: Thymidylate kinase (214 aa).

Residue 7–14 (GVDGAGKR) participates in ATP binding. Residues D9, Y39, F70, R74, R95, N100, and Y103 each contribute to the dTMP site. D9 contributes to the Mg(2+) binding site. Positions 147 to 159 (GERSRGRAQRDPG) are LID. Residues D163 and Y165 each coordinate dTMP. Residue E166 coordinates Mg(2+).

It belongs to the thymidylate kinase family. In terms of assembly, homodimer. The cofactor is Mg(2+).

The catalysed reaction is dTMP + ATP = dTDP + ADP. It functions in the pathway pyrimidine metabolism; dTTP biosynthesis. In terms of biological role, catalyzes the reversible phosphorylation of deoxythymidine monophosphate (dTMP) to deoxythymidine diphosphate (dTDP), using ATP as its preferred phosphoryl donor. Situated at the junction of both de novo and salvage pathways of deoxythymidine triphosphate (dTTP) synthesis, is essential for DNA synthesis and cellular growth. The polypeptide is Thymidylate kinase (tmk) (Mycobacterium tuberculosis (strain CDC 1551 / Oshkosh)).